The chain runs to 285 residues: Hsp90 co-chaperone Cdc37-like 1 (285 aa).

The disordered stretch occupies residues 34 to 54 (LHNSESMDQEQAMAQAELSEL). The stretch at 35-73 (HNSESMDQEQAMAQAELSELQRSEEEWRRKEAALSQGEN) forms a coiled coil.

This sequence belongs to the CDC37 family. Forms complexes with Hsp70 and Hsp90.

Its subcellular location is the cytoplasm. In terms of biological role, co-chaperone that binds to numerous proteins and promotes their interaction with Hsp70 and Hsp90. The protein is Hsp90 co-chaperone Cdc37-like 1 (cdc37l1) of Xenopus tropicalis (Western clawed frog).